A 450-amino-acid polypeptide reads, in one-letter code: Protein indeterminate-domain 13 (450 aa).

A Phosphoserine modification is found at S54. C2H2-type zinc fingers lie at residues 64–86 (FFCE…KRGH) and 106–136 (YICP…SRKH). The short motif at 128–135 (IKKHFSRK) is the Nuclear localization signal element. A C2H2-type 2; degenerate zinc finger spans residues 141–165 (WKCDKCSKKYAVISDWKAHNKICGS). Zn(2+)-binding residues include C143, C146, H159, C163, C170, C172, H185, and C189. Residues 168 to 191 (FRCDCGTLFSRKDSFISHRSFCDV) form a CCHC-type 2; atypical zinc finger. The interval 178 to 190 (RKDSFISHRSFCD) is SHR-binding. Residues 248–263 (FGQKFTNSNPTQQQPN) are compositionally biased toward polar residues. Residues 248 to 280 (FGQKFTNSNPTQQQPNALALSSPPSPRSTSDSV) are disordered.

It is found in the nucleus. Its function is as follows. Probable transcription factor. The chain is Protein indeterminate-domain 13 from Arabidopsis thaliana (Mouse-ear cress).